A 639-amino-acid chain; its full sequence is ATP-dependent zinc metalloprotease FtsH (639 aa).

Residues 1-15 lie on the Cytoplasmic side of the membrane; the sequence is MDNEKQASPPPAAPP. A helical membrane pass occupies residues 16–36; that stretch reads LNWRYLLWIILLGIFLISWLG. At 37 to 123 the chain is on the periplasmic side; sequence NAGRQAGDEI…VQAKSEEPSL (87 aa). The chain crosses the membrane as a helical span at residues 124–144; the sequence is WMQAIIGILPWFLILGLIFYV. The Cytoplasmic portion of the chain corresponds to 145 to 639; it reads SYRMQQRMMG…HNEAVATGAG (495 aa). 221–228 lines the ATP pocket; it reads GRPGTGKT. H442 provides a ligand contact to Zn(2+). E443 is an active-site residue. Positions 446 and 518 each coordinate Zn(2+).

In the central section; belongs to the AAA ATPase family. The protein in the C-terminal section; belongs to the peptidase M41 family. As to quaternary structure, homohexamer. It depends on Zn(2+) as a cofactor.

Its subcellular location is the cell inner membrane. In terms of biological role, acts as a processive, ATP-dependent zinc metallopeptidase for both cytoplasmic and membrane proteins. Plays a role in the quality control of integral membrane proteins. This chain is ATP-dependent zinc metalloprotease FtsH, found in Nitrosococcus oceani (strain ATCC 19707 / BCRC 17464 / JCM 30415 / NCIMB 11848 / C-107).